The chain runs to 600 residues: DNA ligase (600 aa).

Residue Asp258 coordinates ATP. Catalysis depends on Lys260, which acts as the N6-AMP-lysine intermediate. ATP contacts are provided by Arg265, Arg280, Glu310, Phe350, Arg427, and Lys433.

Belongs to the ATP-dependent DNA ligase family. Mg(2+) is required as a cofactor.

It carries out the reaction ATP + (deoxyribonucleotide)n-3'-hydroxyl + 5'-phospho-(deoxyribonucleotide)m = (deoxyribonucleotide)n+m + AMP + diphosphate.. Inhibited by PCNA123 and PCNA323. In terms of biological role, DNA ligase that seals nicks in double-stranded DNA during DNA replication, DNA recombination and DNA repair. In Sulfurisphaera tokodaii (strain DSM 16993 / JCM 10545 / NBRC 100140 / 7) (Sulfolobus tokodaii), this protein is DNA ligase.